Reading from the N-terminus, the 119-residue chain is Cysteine-rich DPF motif domain-containing protein 1 (119 aa).

Belongs to the CDPF1 family.

In Mus musculus (Mouse), this protein is Cysteine-rich DPF motif domain-containing protein 1 (Cdpf1).